Consider the following 95-residue polypeptide: UPF0213 protein YPK_3712 (95 aa).

Positions 4-79 (SLWHLYLLRT…KQLSKQQKEK (76 aa)) constitute a GIY-YIG domain.

Belongs to the UPF0213 family.

The sequence is that of UPF0213 protein YPK_3712 from Yersinia pseudotuberculosis serotype O:3 (strain YPIII).